Consider the following 674-residue polypeptide: MPKQIVIAEKHQVAAVFWKDQIQELVVSTGSQQVGDIYLGLVDNILPSIDAAFINIGDTEKNGFIHVSDLGPVRLRRTAGSISELLSPQQRVLVQVMKEPTGNKGPRLTGNISMPGRYMVLMPYGRGVNLSRRINREEERSRLRALAVLIKPPGMGLLVRTEAEDVPEDAIIEDLENLQKQWELVQQQAMTRSAPMLLDRDDDFIKRVLRDMYSSEVNRIVVDTPAGMKRIKQQLMNWDQGRLPEGVLIDCHRESLSILEYFRVNATIREALKPRVDLPSGGYIIIEPTEALTVIDVNSGSFTHSANSRETVLWTNYEAATEIARQLKLRNIGGVIIIDFIDMDSHKDQLQLLEHFNRCLETDKARPQIAQLTELGLVELTRKRQGQNLYELFGQPCPECGGLGHLVELPGEKGFVSLSPTAVNSSIPPRLVEKPILSPPVAKVNDLPKKEEAKISSPLDLLFHPNYQEQGDRDSNRRRRRRRGSEFSEKENIKSVGISRSKGPSPSPTKEKVTGTAPPRRERPSRRVEKTLVPVDVAMTTLEQDIYARMGISPLIKTEYADQDPRSFMVSVVTAGAALEGNTNGSGSLVNAVITTVDNGDNGDNVPSDGLTIVSEVTAPTPVIEQPREETVEPEQVVLPQLDDETPAAPVAEESAPIETKKRPGRRRRRSSAE.

Positions G35 to R117 constitute an S1 motif domain. Mg(2+) is bound by residues D296 and D339. Zn(2+)-binding residues include C397 and C400. Disordered regions lie at residues P458–E529 and Q626–E674. Basic and acidic residues-rich tracts occupy residues G484 to I493 and T509 to E529. Residues R663–E674 are compositionally biased toward basic residues. The C4 Arg-rich motif, probably responsible for interaction with PNPase signature appears at G665 to A673.

Belongs to the RNase E/G family. In terms of assembly, fractionates in a 250-300 kDa region, which is too small to be the equivalent of an RNA degradosome, as occurs with E.coli RNase E. Interacts with polynucleotide phosphorylase (PNPase, pnp), probably via the C4 Arg-rich motif (residues 665-673). Mg(2+) is required as a cofactor.

Its subcellular location is the cytoplasm. The protein resides in the cell inner membrane. The catalysed reaction is Endonucleolytic cleavage of single-stranded RNA in A- and U-rich regions.. Its function is as follows. Endoribonuclease that plays a central role in rRNA processing and mRNA decay, and probably tRNA processing. Acts on 9S rRNA (the precursor of 5S rRNA) and RNAI, a molecule that controls the replication of ColE1 plasmid. Upon expression in E.coli does not purify with endogenous degradosome proteins. Prefers 5'-monophosphorylated substrates over 5'-triphosphorylated substrates. Complements an rne temperature-sensitive mutation in E.coli, despite being considerably shorter and not able to interact with the E.coli degradosome. Cleaves AU-rich sequences in vitro, tested with psbA2 mRNA. Complements both an rne temperature-sensitive mutation and an rng deletion in E.coli. Acts in the degradation of psaL mRNA in the presence but not the absence of the sRNA PsrR1. Cleaves the rimO-crhR transcript, contributing to the very short half-life of rimO mRNA. In terms of biological role, mRNA for psbA2, one of the core proteins in photosystem II, is degraded in the dark under control of a cis-acting AU-rich box in its 5'-UTR. RNase E cuts in this box, suggesting it is involved in this dark-induced mRNA instability. CRISPR (clustered regularly interspaced short palindromic repeat) is an adaptive immune system that provides protection against mobile genetic elements (viruses, transposable elements and conjugative plasmids). CRISPR clusters contain spacers, sequences complementary to antecedent mobile elements, and target invading nucleic acids. CRISPR clusters are transcribed and processed into CRISPR RNA (crRNA). Endogenous RNase E is required for correct processing of pre-crRNA for the CRISPR3 subtype III-B system in this genome (genes sll7080 to sll7095). This CRISPR3 system does not include a cas6 gene, which is the usual RNase involved in crRNA maturation. In Synechocystis sp. (strain ATCC 27184 / PCC 6803 / Kazusa), this protein is Ribonuclease E.